The sequence spans 146 residues: Hemoglobin subunit beta (146 aa).

V1 carries the post-translational modification N-acetylvaline. In terms of domain architecture, Globin spans 2 to 146 (HLTPEEKTAV…VANALAHKYH (145 aa)). The residue at position 12 (T12) is a Phosphothreonine. S44 carries the phosphoserine modification. K59 carries the N6-acetyllysine modification. Heme b is bound at residue H63. K82 is subject to N6-acetyllysine. Residue H92 participates in heme b binding. C93 bears the S-nitrosocysteine mark. Position 144 is an N6-acetyllysine (K144).

It belongs to the globin family. As to quaternary structure, heterotetramer of two alpha chains and two beta chains. Red blood cells.

Involved in oxygen transport from the lung to the various peripheral tissues. In Chlorocebus aethiops (Green monkey), this protein is Hemoglobin subunit beta (HBB).